Reading from the N-terminus, the 404-residue chain is MQDILTVILAGGMGSRLSPLTDDRAKPAVPFGGKYRIIDFTLTNCLHSGLRKILVLTQYKSHSLQKHLRDGWSIFNPELGEYITSVPPQMRKGGKWYEGTADAIYHNLWLLERSEAKYVMVLSGDHIYRMDYAPMLEEHIANNAALTVACMDVNCKEAKAFGVMGIDEHHRVHSFVEKPQNPPHLPNDPERSLVSMGIYIFSMEVLQQALIEDADNDASSHDFGKDIIPKLIDTGSVFAYKFCGSKGRVDKDCYWRDVGTIDSFYQANMDLLEPIPPMNLYQKDWGIRTYEPQYPPARTVSSGSGNEGIFINSMISNGVINSGGSVQHSIVSSNVRINDSATIVDSIIFDDVEIGEGCQLVNCIIDKHVKVPPYTQIGLNRLEDAQRFKISENGIVVVPESYQF.

Residues Y97, G162, 177 to 178, and S195 each bind alpha-D-glucose 1-phosphate; that span reads EK.

Belongs to the bacterial/plant glucose-1-phosphate adenylyltransferase family. As to quaternary structure, homotetramer.

The enzyme catalyses alpha-D-glucose 1-phosphate + ATP + H(+) = ADP-alpha-D-glucose + diphosphate. The protein operates within glycan biosynthesis; glycogen biosynthesis. Involved in the biosynthesis of ADP-glucose, a building block required for the elongation reactions to produce glycogen. Catalyzes the reaction between ATP and alpha-D-glucose 1-phosphate (G1P) to produce pyrophosphate and ADP-Glc. The protein is Glucose-1-phosphate adenylyltransferase 2 of Vibrio vulnificus (strain YJ016).